The following is a 152-amino-acid chain: uncharacterized protein (152 aa).

Residues 1–24 (MRKMLAYTLYIVTYLTYIMNEVEC) form the signal peptide.

This is an uncharacterized protein from Acheta domesticus (House cricket).